Here is a 1659-residue protein sequence, read N- to C-terminus: Intersectin-2 (1659 aa).

The 89-residue stretch at 22–110 (ERTKHDKQFD…PIMKQPPMFS (89 aa)) folds into the EH 1 domain. Positions 54-89 (LPAPVLAEIWALSDLNKDGKMDQQEFSIAMKLIKLK) constitute an EF-hand 1 domain. The Ca(2+) site is built by Asp-67, Asn-69, Asp-71, Lys-73, and Glu-78. Ser-110, Ser-211, and Ser-231 each carry phosphoserine. A compositionally biased stretch (low complexity) spans 220–231 (STSSTASLSGNS). The segment at 220-242 (STSSTASLSGNSPKTGTSEWAVP) is disordered. The region spanning 245-334 (SRLKYRQKFN…PELVPPSFRG (90 aa)) is the EH 2 domain. One can recognise an EF-hand 2 domain in the interval 278–313 (LSQTQLATIWTLADIDGDGQLKAEEFILAMHLTDMA). The segment at 335-382 (GKQVDSVNGTLPSYQKTQEEEPQKKLPVTFEDKRKANYERGNMELEKR) is disordered. The span at 339-350 (DSVNGTLPSYQK) shows a compositional bias: polar residues. Basic and acidic residues predominate over residues 351-382 (TQEEEPQKKLPVTFEDKRKANYERGNMELEKR). Positions 365-717 (EDKRKANYER…KAEAKQSETA (353 aa)) form a coiled coil. Tyr-554 carries the post-translational modification Phosphotyrosine. At Thr-574 the chain carries Phosphothreonine. A compositionally biased stretch (basic and acidic residues) spans 689 to 713 (KQKRLQEEKSQDKTQEEERKAEAKQ). Residues 689–715 (KQKRLQEEKSQDKTQEEERKAEAKQSE) form a disordered region. In terms of domain architecture, SH3 1 spans 718–779 (SALVNYRALY…PCNYVEKVLS (62 aa)). Thr-836 carries the post-translational modification Phosphothreonine. A phosphoserine mark is found at Ser-838 and Ser-843. An SH3 2 domain is found at 852–910 (VENLKAQALCSWTAKKENHLNFSKHDVITVLEQQENWWFGEVHGGRGWFPKSYVKLIPG). At Tyr-922 the chain carries Phosphotyrosine. 3 consecutive SH3 domains span residues 942–1000 (PVGE…PKDQ), 1014–1078 (KKPE…LLGP), and 1088–1147 (HAVC…MTTD). A DH domain is found at 1170–1357 (KRQGYIHELI…EELCSQVNEG (188 aa)). Residues 1396 to 1506 (KLLHSGKLYK…WVQKIKGASE (111 aa)) form the PH domain. A C2 domain is found at 1514–1630 (KKREKAYQAR…RTEQESKGPT (117 aa)). Ca(2+) contacts are provided by Asp-1602, Ser-1605, and Asp-1608.

Belongs to a complex that may contain multimers of ITSN1, ITSN2 and EPS15, and different partners according to the step in the endocytic process. Interacts with ADAM15. Interacts with FASLG. Interacts with ANKRD54. Interacts with FCHO2. It depends on Ca(2+) as a cofactor. As to expression, widely expressed in adult tissues.

Its subcellular location is the cytoplasm. Functionally, adapter protein that may provide indirect link between the endocytic membrane traffic and the actin assembly machinery. May regulate the formation of clathrin-coated vesicles (CCPs). Seems to be involved in CCPs maturation including invagination or budding. Involved in endocytosis of integrin beta-1 (ITGB1) and transferrin receptor (TFR). Plays a role in dendrite formation by melanocytes. In Mus musculus (Mouse), this protein is Intersectin-2 (Itsn2).